Here is a 317-residue protein sequence, read N- to C-terminus: MSIQNSSARRRSAGRIVYAAGAVLWRPGSADSEGPVEIAVIHRPRYDDWSLPKGKVDPGETAPVGAVREILEETGHRANLGRRLLTVTYPTDSPFRGVKKVHYWAARSTGGEFTPGSEVDELIWLPVPDAMNKLDYAQDRKVLCRFAKHPADTQTVLVVRHGTAGSKAHFSGDDSKRPLDKRGRAQAEALVPQLLAFGATDVYAADRVRCHQTMEPLAAELNVTIHNEPTLTEESYANNPKRGRHRVLQIVEQVGTPVICTQGKVIPDLITWWCERDGVHPDKSRNRKGSTWVLSLSAGRLVTADHIGGALAANVRA.

In terms of domain architecture, Nudix hydrolase spans 15-148; sequence RIVYAAGAVL…DRKVLCRFAK (134 aa). Residues 43 to 46, Asp-48, and 53 to 55 each bind substrate; these read RPRY and KGK. Mg(2+) contacts are provided by Lys-53, Glu-69, and Glu-73. A Nudix box motif is present at residues 54 to 75; the sequence is GKVDPGETAPVGAVREILEETG. Substrate-binding residues include Tyr-89, Lys-99, Glu-118, and Tyr-136. Glu-118 is a Mg(2+) binding site.

Belongs to the Nudix hydrolase family. Mg(2+) is required as a cofactor.

The enzyme catalyses 8-oxo-dGTP + H2O = 8-oxo-dGDP + phosphate + H(+). It catalyses the reaction 8-oxo-GTP + H2O = 8-oxo-GDP + phosphate + H(+). Its function is as follows. Catalyzes the conversion of 8-oxo-dGTP to 8-oxo-dGDP, and 8-oxo-GTP to 8-oxo-GDP. This Mycobacterium tuberculosis (strain CDC 1551 / Oshkosh) protein is 8-oxo-(d)GTP phosphatase.